Reading from the N-terminus, the 166-residue chain is Phosphopantetheine adenylyltransferase (166 aa).

Position 11 (T11) interacts with substrate. ATP is bound by residues 11–12 and H19; that span reads TF. The substrate site is built by K43, T79, and R93. Residues E104 and 128 to 134 each bind ATP; that span reads LEPLNST.

This sequence belongs to the bacterial CoaD family. Homohexamer. Requires Mg(2+) as cofactor.

Its subcellular location is the cytoplasm. It catalyses the reaction (R)-4'-phosphopantetheine + ATP + H(+) = 3'-dephospho-CoA + diphosphate. It functions in the pathway cofactor biosynthesis; coenzyme A biosynthesis; CoA from (R)-pantothenate: step 4/5. Its function is as follows. Reversibly transfers an adenylyl group from ATP to 4'-phosphopantetheine, yielding dephospho-CoA (dPCoA) and pyrophosphate. In Lactococcus lactis subsp. cremoris (strain MG1363), this protein is Phosphopantetheine adenylyltransferase.